A 345-amino-acid chain; its full sequence is MRPTARQFTLPDLFSICPLQDATNPWYKQAAAESRAWINSYNIFTDRKRAFFIQGSNELLCSHVYAYAGYEQFRTCCDFVNLLFVVDEISDDQNGQDARATGRIFVNAMRDAHWDDGSILAKITHEFRERFVRLAGPKTVRRFADLCESYTDCVAREAELRERNQVLGLNDFIALRRQNSAVLLCYSLVEYILGIDLDDEVYEDPTFAKAYWAACDFVCWANDVYSYDMEQAKGHTGNNVVTVLMKEKDLSLQEASDYIGRECEKQMRDYLEAKSQLLQSTDLPQEAVRYIEALGYWMVGNLVWSFESQRYFGAQHERVKATHVVHLRPSSVLEASCDSDSDSDC.

Residues aspartate 87, aspartate 91, asparagine 222, serine 226, and glutamate 230 each contribute to the Mg(2+) site. The DDXXD motif motif lies at 87–91 (DEISD).

It belongs to the terpene synthase family. Mg(2+) is required as a cofactor.

It carries out the reaction (2E,6E)-farnesyl diphosphate + H2O = cubebol + diphosphate. The enzyme catalyses (2E,6E)-farnesyl diphosphate = beta-copaene + diphosphate. The catalysed reaction is (2E,6E)-farnesyl diphosphate = beta-cubebene + diphosphate. It catalyses the reaction (2E,6E)-farnesyl diphosphate = (+)-sativene + diphosphate. Sesquiterpene synthase that catalyzes the cyclization of farnesyl diphosphate (FPP) into multiple products, including germacrene D, beta-copaene, beta-cubebene, (+)-sativene and cubebol, a natural sesquiterpene alcohol used in the food industry for its cooling and refreshing taste. Terpenoid hydrocarbons resulting from cyclization of farnesyl diphosphate are intermediates in the biosynthesis of biologically active compounds such as antibiotics, toxins and pheromones. This chain is Linoleate 10R-lipoxygenase COP4 (COP4), found in Coprinopsis cinerea (strain Okayama-7 / 130 / ATCC MYA-4618 / FGSC 9003) (Inky cap fungus).